Reading from the N-terminus, the 718-residue chain is Polyribonucleotide nucleotidyltransferase (718 aa).

Mg(2+) is bound by residues aspartate 496 and aspartate 502. A KH domain is found at 563–622; that stretch reads PRLLTIKIDPDMIGLVIGPGGKTIKGITEETGAKIDIEDDGTVTISAVDENKAKRARNIV. Residues 632 to 700 form the S1 motif domain; it reads GDVYAGRVTR…NKGRINLTRL (69 aa).

In terms of assembly, may form homodimers or higher order multimers. Interacts with RNase E (rne). The cofactor is Mg(2+).

The protein localises to the cytoplasm. The catalysed reaction is RNA(n+1) + phosphate = RNA(n) + a ribonucleoside 5'-diphosphate. Its function is as follows. Involved in mRNA degradation. Catalyzes the phosphorolysis of single-stranded polyribonucleotides processively in the 3'- to 5'-direction. The chain is Polyribonucleotide nucleotidyltransferase from Nostoc sp. (strain PCC 7120 / SAG 25.82 / UTEX 2576).